Reading from the N-terminus, the 414-residue chain is L-cysteine:1D-myo-inositol 2-amino-2-deoxy-alpha-D-glucopyranoside ligase (414 aa).

Cysteine 43 is a Zn(2+) binding site. L-cysteinyl-5'-AMP-binding positions include 43–46 (CGIT), threonine 58, and 81–83 (NIT). The 'HIGH' region signature appears at 45-55 (ITPYDATHLGH). The 'ERGGDP' region signature appears at 189–194 (ERGGDP). Residue tryptophan 229 coordinates L-cysteinyl-5'-AMP. Cysteine 233 provides a ligand contact to Zn(2+). 251–253 (GSD) provides a ligand contact to L-cysteinyl-5'-AMP. Residue histidine 258 participates in Zn(2+) binding. Residue isoleucine 285 participates in L-cysteinyl-5'-AMP binding. A 'KMSKS' region motif is present at residues 291-295 (KMSKS).

Belongs to the class-I aminoacyl-tRNA synthetase family. MshC subfamily. In terms of assembly, monomer. Zn(2+) serves as cofactor.

The enzyme catalyses 1D-myo-inositol 2-amino-2-deoxy-alpha-D-glucopyranoside + L-cysteine + ATP = 1D-myo-inositol 2-(L-cysteinylamino)-2-deoxy-alpha-D-glucopyranoside + AMP + diphosphate + H(+). In terms of biological role, catalyzes the ATP-dependent condensation of GlcN-Ins and L-cysteine to form L-Cys-GlcN-Ins. The protein is L-cysteine:1D-myo-inositol 2-amino-2-deoxy-alpha-D-glucopyranoside ligase (mshC) of Mycobacterium bovis (strain ATCC BAA-935 / AF2122/97).